The primary structure comprises 502 residues: UPF0371 protein CLL_A2797 (502 aa).

Belongs to the UPF0371 family.

The chain is UPF0371 protein CLL_A2797 from Clostridium botulinum (strain Eklund 17B / Type B).